A 370-amino-acid polypeptide reads, in one-letter code: Galanin receptor type 3 (370 aa).

Residues 1–20 (MADIQNISLDSPGSVGAVAV) lie on the Extracellular side of the membrane. A glycan (N-linked (GlcNAc...) asparagine) is linked at Asn-6. Residues 21 to 41 (PVVFALIFLLGMVGNGLVLAV) traverse the membrane as a helical segment. Topologically, residues 42-57 (LLQPGPSAWQEPGSTT) are cytoplasmic. A helical transmembrane segment spans residues 58–78 (DLFILNLAVADLCFILCCVPF). The Extracellular segment spans residues 79–96 (QAAIYTLDAWLFGAFVCK). Cysteines 95 and 172 form a disulfide. The chain crosses the membrane as a helical span at residues 97–118 (TVHLLIYLTMYASSFTLAAVSV). Residues 119–138 (DRYLAVRHPLRSRALRTPRN) lie on the Cytoplasmic side of the membrane. A helical transmembrane segment spans residues 139 to 159 (ARAAVGLVWLLAALFSAPYLS). At 160-184 (YYGTVRYGALELCVPAWEDARRRAL) the chain is on the extracellular side. Residues 185 to 205 (DVATFAAGYLLPVTVVSLAYG) form a helical membrane-spanning segment. Residues 206–236 (RTLCFLWAAVGPAGAAAAEARRRATGRAGRA) are Cytoplasmic-facing. A helical transmembrane segment spans residues 237–257 (MLTVAALYALCWGPHHALILC). Residues 258-259 (FW) are Extracellular-facing. A helical membrane pass occupies residues 260–280 (YGRFAFSPATYACRLASHCLA). The Cytoplasmic portion of the chain corresponds to 281–370 (YANSCLNPLV…RLTLSARGPQ (90 aa)). The S-palmitoyl cysteine moiety is linked to residue Cys-308. Residues 328–370 (QPASSGPAGYPGDARPRGWSMEPRGDALRGGETRLTLSARGPQ) form a disordered region. Over residues 350 to 359 (PRGDALRGGE) the composition is skewed to basic and acidic residues.

The protein belongs to the G-protein coupled receptor 1 family.

It is found in the cell membrane. In terms of biological role, receptor for the hormone galanin and spexin-1. This chain is Galanin receptor type 3 (Galr3), found in Mus musculus (Mouse).